Consider the following 208-residue polypeptide: Adenylyl-sulfate kinase (208 aa).

31-38 (GLSGSGKS) provides a ligand contact to ATP. S105 (phosphoserine intermediate) is an active-site residue.

Belongs to the APS kinase family.

The enzyme catalyses adenosine 5'-phosphosulfate + ATP = 3'-phosphoadenylyl sulfate + ADP + H(+). It functions in the pathway sulfur metabolism; hydrogen sulfide biosynthesis; sulfite from sulfate: step 2/3. Catalyzes the synthesis of activated sulfate. The sequence is that of Adenylyl-sulfate kinase from Pseudomonas entomophila (strain L48).